We begin with the raw amino-acid sequence, 118 residues long: Small ribosomal subunit protein uS13 (118 aa).

The segment at Gly-94 to Lys-118 is disordered.

Belongs to the universal ribosomal protein uS13 family. As to quaternary structure, part of the 30S ribosomal subunit. Forms a loose heterodimer with protein S19. Forms two bridges to the 50S subunit in the 70S ribosome.

In terms of biological role, located at the top of the head of the 30S subunit, it contacts several helices of the 16S rRNA. In the 70S ribosome it contacts the 23S rRNA (bridge B1a) and protein L5 of the 50S subunit (bridge B1b), connecting the 2 subunits; these bridges are implicated in subunit movement. Contacts the tRNAs in the A and P-sites. The protein is Small ribosomal subunit protein uS13 of Chromohalobacter salexigens (strain ATCC BAA-138 / DSM 3043 / CIP 106854 / NCIMB 13768 / 1H11).